The sequence spans 670 residues: DNA ligase (670 aa).

NAD(+) contacts are provided by residues 32 to 36 (DAEYD), 81 to 82 (SL), and glutamate 113. The N6-AMP-lysine intermediate role is filled by lysine 115. Positions 136, 173, 290, and 314 each coordinate NAD(+). Zn(2+) is bound by residues cysteine 408, cysteine 411, cysteine 426, and cysteine 432. A BRCT domain is found at 592 to 670 (ESDSPFAGKT…EAEMIRLLGE (79 aa)).

Belongs to the NAD-dependent DNA ligase family. LigA subfamily. Mg(2+) serves as cofactor. It depends on Mn(2+) as a cofactor.

The catalysed reaction is NAD(+) + (deoxyribonucleotide)n-3'-hydroxyl + 5'-phospho-(deoxyribonucleotide)m = (deoxyribonucleotide)n+m + AMP + beta-nicotinamide D-nucleotide.. DNA ligase that catalyzes the formation of phosphodiester linkages between 5'-phosphoryl and 3'-hydroxyl groups in double-stranded DNA using NAD as a coenzyme and as the energy source for the reaction. It is essential for DNA replication and repair of damaged DNA. In Yersinia pestis bv. Antiqua (strain Antiqua), this protein is DNA ligase.